Reading from the N-terminus, the 1571-residue chain is Pentafunctional AROM polypeptide (1571 aa).

Residues 1 to 384 (MEQPTTIQIL…HEQKASVVSN (384 aa)) form a 3-dehydroquinate synthase region. Residues 44-46 (DTN), 81-84 (ESSK), 114-116 (GGV), and Asp119 each bind NAD(+). Position 130 (Arg130) interacts with 7-phospho-2-dehydro-3-deoxy-D-arabino-heptonate. Residue 139-140 (TT) coordinates NAD(+). 7-phospho-2-dehydro-3-deoxy-D-arabino-heptonate contacts are provided by Asp146 and Lys152. Lys161 is a binding site for NAD(+). Asn162 is a binding site for 7-phospho-2-dehydro-3-deoxy-D-arabino-heptonate. NAD(+)-binding positions include 179 to 182 (FLNT) and Asn190. Position 194 (Glu194) interacts with Zn(2+). 7-phospho-2-dehydro-3-deoxy-D-arabino-heptonate contacts are provided by residues 194-197 (EVIK) and Lys250. Catalysis depends on Glu260, which acts as the Proton acceptor; for 3-dehydroquinate synthase activity. 7-phospho-2-dehydro-3-deoxy-D-arabino-heptonate-binding positions include 264–268 (RNLLN) and His271. His271 lines the Zn(2+) pocket. His275 functions as the Proton acceptor; for 3-dehydroquinate synthase activity in the catalytic mechanism. Positions 287 and 356 each coordinate 7-phospho-2-dehydro-3-deoxy-D-arabino-heptonate. His287 is a Zn(2+) binding site. The interval 397 to 843 (VLPGIPKPLN…WDALAQTFKV (447 aa)) is EPSP synthase. Cys825 (for EPSP synthase activity) is an active-site residue. The segment at 866 to 1057 (ASIFIIGMRG…KKKDHSFFVS (192 aa)) is shikimate kinase. An ATP-binding site is contributed by 872–879 (GMRGAGKT). Positions 1058-1278 (LTLPDLQLSA…AAPGQVSAKD (221 aa)) are 3-dehydroquinase. His1181 acts as the Proton acceptor; for 3-dehydroquinate dehydratase activity in catalysis. Residue Lys1209 is the Schiff-base intermediate with substrate; for 3-dehydroquinate dehydratase activity of the active site. The tract at residues 1291–1571 (AKKFALFGKP…EDARAAVMNI (281 aa)) is shikimate dehydrogenase.

It in the N-terminal section; belongs to the sugar phosphate cyclases superfamily. Dehydroquinate synthase family. This sequence in the 2nd section; belongs to the EPSP synthase family. The protein in the 3rd section; belongs to the shikimate kinase family. In the 4th section; belongs to the type-I 3-dehydroquinase family. It in the C-terminal section; belongs to the shikimate dehydrogenase family. In terms of assembly, homodimer. It depends on Zn(2+) as a cofactor.

It is found in the cytoplasm. The catalysed reaction is 7-phospho-2-dehydro-3-deoxy-D-arabino-heptonate = 3-dehydroquinate + phosphate. It catalyses the reaction 3-dehydroquinate = 3-dehydroshikimate + H2O. It carries out the reaction shikimate + NADP(+) = 3-dehydroshikimate + NADPH + H(+). The enzyme catalyses shikimate + ATP = 3-phosphoshikimate + ADP + H(+). The catalysed reaction is 3-phosphoshikimate + phosphoenolpyruvate = 5-O-(1-carboxyvinyl)-3-phosphoshikimate + phosphate. It participates in metabolic intermediate biosynthesis; chorismate biosynthesis; chorismate from D-erythrose 4-phosphate and phosphoenolpyruvate: step 2/7. It functions in the pathway metabolic intermediate biosynthesis; chorismate biosynthesis; chorismate from D-erythrose 4-phosphate and phosphoenolpyruvate: step 3/7. The protein operates within metabolic intermediate biosynthesis; chorismate biosynthesis; chorismate from D-erythrose 4-phosphate and phosphoenolpyruvate: step 4/7. Its pathway is metabolic intermediate biosynthesis; chorismate biosynthesis; chorismate from D-erythrose 4-phosphate and phosphoenolpyruvate: step 5/7. It participates in metabolic intermediate biosynthesis; chorismate biosynthesis; chorismate from D-erythrose 4-phosphate and phosphoenolpyruvate: step 6/7. In terms of biological role, the AROM polypeptide catalyzes 5 consecutive enzymatic reactions in prechorismate polyaromatic amino acid biosynthesis. This is Pentafunctional AROM polypeptide from Arthroderma otae (strain ATCC MYA-4605 / CBS 113480) (Microsporum canis).